Reading from the N-terminus, the 370-residue chain is Developmentally-regulated GTP-binding protein 1 homolog (370 aa).

Residues 65–292 form the OBG-type G domain; the sequence is ARVGLIGFPS…LLDKIWEYLK (228 aa). GTP is bound by residues 71–78, 117–121, and 250–253; these read GFPSVGKS, DLPGI, and NKID. Residues 292-369 enclose the TGS domain; sequence KLIRVYTKPK…ADEDIVQIVK (78 aa).

The protein belongs to the TRAFAC class OBG-HflX-like GTPase superfamily. OBG GTPase family.

The sequence is that of Developmentally-regulated GTP-binding protein 1 homolog (drg1) from Dictyostelium discoideum (Social amoeba).